The following is a 410-amino-acid chain: Dipeptidase 1 (410 aa).

Residues 1–16 (MWTSWWLWPLVAVCTA) form the signal peptide. The Zn(2+) site is built by histidine 36 and aspartate 38. The N-linked (GlcNAc...) asparagine glycan is linked to asparagine 57. An intrachain disulfide couples cysteine 87 to cysteine 170. Position 141 (glutamate 141) interacts with Zn(2+). Residue histidine 168 coordinates substrate. Residues histidine 214 and histidine 235 each contribute to the Zn(2+) site. Cysteine 242 and cysteine 274 form a disulfide bridge. Substrate is bound by residues arginine 246 and aspartate 304. Residue serine 384 is the site of GPI-anchor amidated serine attachment. The propeptide at 385-410 (EAPSLHRRPGALLASLSLLLLSLGLL) is removed in mature form.

Belongs to the metallo-dependent hydrolases superfamily. Peptidase M19 family. In terms of assembly, homodimer; disulfide-linked. Zn(2+) serves as cofactor.

It localises to the apical cell membrane. It is found in the cell projection. The protein resides in the microvillus membrane. It carries out the reaction an L-aminoacyl-L-amino acid + H2O = 2 an L-alpha-amino acid. The catalysed reaction is leukotriene D4 + H2O = leukotriene E4 + glycine. The enzyme catalyses L-cystine-bis-glycine + 2 H2O = L-cystine + 2 glycine. It catalyses the reaction a beta-lactam + H2O = a substituted beta-amino acid. It carries out the reaction glycyldehydrophenylalanine + H2O = 2,3-didehydrophenylalanine + glycine. Its activity is regulated as follows. Inhibited by L-penicillamine. Beta-lactamase activity is inhibited by cilastatin. In terms of biological role, hydrolyzes a wide range of dipeptides including the conversion of leukotriene D4 to leukotriene E4. Hydrolyzes cystinyl-bis-glycine (cys-bis-gly) formed during glutathione degradation. Also possesses beta lactamase activity and hydrolytically inactivates beta-lactam antibiotics. Its function is as follows. Independently of its dipeptidase activity, acts as an adhesion receptor for neutrophil recruitment from bloodstream into inflamed lungs and liver. The chain is Dipeptidase 1 (DPEP1) from Oryctolagus cuniculus (Rabbit).